A 472-amino-acid chain; its full sequence is ATP synthase subunit beta (472 aa).

149-156 (GGAGVGKT) is a binding site for ATP.

Belongs to the ATPase alpha/beta chains family. In terms of assembly, F-type ATPases have 2 components, CF(1) - the catalytic core - and CF(0) - the membrane proton channel. CF(1) has five subunits: alpha(3), beta(3), gamma(1), delta(1), epsilon(1). CF(0) has three main subunits: a(1), b(2) and c(9-12). The alpha and beta chains form an alternating ring which encloses part of the gamma chain. CF(1) is attached to CF(0) by a central stalk formed by the gamma and epsilon chains, while a peripheral stalk is formed by the delta and b chains.

Its subcellular location is the cell inner membrane. It catalyses the reaction ATP + H2O + 4 H(+)(in) = ADP + phosphate + 5 H(+)(out). Produces ATP from ADP in the presence of a proton gradient across the membrane. The catalytic sites are hosted primarily by the beta subunits. This Pelagibacter ubique (strain HTCC1062) protein is ATP synthase subunit beta.